The sequence spans 249 residues: Ribosomal RNA small subunit methyltransferase G (249 aa).

S-adenosyl-L-methionine-binding residues include glycine 86, phenylalanine 91, and arginine 178.

The protein belongs to the methyltransferase superfamily. RNA methyltransferase RsmG family.

It is found in the cytoplasm. Specifically methylates the N7 position of a guanine in 16S rRNA. This chain is Ribosomal RNA small subunit methyltransferase G, found in Bifidobacterium adolescentis (strain ATCC 15703 / DSM 20083 / NCTC 11814 / E194a).